The chain runs to 149 residues: D-aminoacyl-tRNA deacylase (149 aa).

The short motif at 137-138 is the Gly-cisPro motif, important for rejection of L-amino acids element; that stretch reads GP.

This sequence belongs to the DTD family. In terms of assembly, homodimer.

Its subcellular location is the cytoplasm. The catalysed reaction is glycyl-tRNA(Ala) + H2O = tRNA(Ala) + glycine + H(+). It carries out the reaction a D-aminoacyl-tRNA + H2O = a tRNA + a D-alpha-amino acid + H(+). Functionally, an aminoacyl-tRNA editing enzyme that deacylates mischarged D-aminoacyl-tRNAs. Also deacylates mischarged glycyl-tRNA(Ala), protecting cells against glycine mischarging by AlaRS. Acts via tRNA-based rather than protein-based catalysis; rejects L-amino acids rather than detecting D-amino acids in the active site. By recycling D-aminoacyl-tRNA to D-amino acids and free tRNA molecules, this enzyme counteracts the toxicity associated with the formation of D-aminoacyl-tRNA entities in vivo and helps enforce protein L-homochirality. The polypeptide is D-aminoacyl-tRNA deacylase (Thermoanaerobacter sp. (strain X514)).